A 157-amino-acid polypeptide reads, in one-letter code: ESNSKARRGILRRAVFSEDQRKALEKMFQKQKYISKTDRKKLAINLGLKESQVKIWFQNRRMKWRNSKEKEVLSNRCLQEGLQENYLSQSAMNFASPCPSVWEVSQEQTSPRWKEKSPGNSERLTSTQPPPRANSSQSPLYLYPDHDTANKAVTSSD.

The homeobox DNA-binding region spans 9–68 (GILRRAVFSEDQRKALEKMFQKQKYISKTDRKKLAINLGLKESQVKIWFQNRRMKWRNSK). A disordered region spans residues 105–157 (SQEQTSPRWKEKSPGNSERLTSTQPPPRANSSQSPLYLYPDHDTANKAVTSSD). Residues 118–139 (PGNSERLTSTQPPPRANSSQSP) show a composition bias toward polar residues.

Belongs to the H2.0 homeobox family. In terms of tissue distribution, localized to the central nervous system during embryogenesis. It is found restricted to the rostro-caudal and dorso-ventral regions of the hindbrain. In the ventricular zone of the spinal cord, it localizes to the dorsal part of the basal plate. In the adult, it is detected in ovary.

It is found in the nucleus. Appears to perform a very early function in establishing the identity of a subset of cells that originate in the region of the ventricular zone in the developing spinal cord and in the hindbrain. In Gallus gallus (Chicken), this protein is Homeobox protein DBX2 (DBX2).